Reading from the N-terminus, the 314-residue chain is Aspartate carbamoyltransferase catalytic subunit (314 aa).

The carbamoyl phosphate site is built by R55 and T56. An L-aspartate-binding site is contributed by K83. Residues R105, H139, and Q142 each coordinate carbamoyl phosphate. Residues R172 and R226 each contribute to the L-aspartate site. The carbamoyl phosphate site is built by G267 and P268.

The protein belongs to the aspartate/ornithine carbamoyltransferase superfamily. ATCase family. In terms of assembly, heterododecamer (2C3:3R2) of six catalytic PyrB chains organized as two trimers (C3), and six regulatory PyrI chains organized as three dimers (R2).

The catalysed reaction is carbamoyl phosphate + L-aspartate = N-carbamoyl-L-aspartate + phosphate + H(+). The protein operates within pyrimidine metabolism; UMP biosynthesis via de novo pathway; (S)-dihydroorotate from bicarbonate: step 2/3. Catalyzes the condensation of carbamoyl phosphate and aspartate to form carbamoyl aspartate and inorganic phosphate, the committed step in the de novo pyrimidine nucleotide biosynthesis pathway. The polypeptide is Aspartate carbamoyltransferase catalytic subunit (Rhodococcus opacus (strain B4)).